Here is a 143-residue protein sequence, read N- to C-terminus: MQLNNLKPAAGSKHAKRRVGRGIGSGLGKTAGRGHKGQKSRSGGFHKVGFEGGQMPLHRRLPKRGFTSLTKEFTAEVRLGDLAGLPVAEIDLLTLKQAGLVGELVKSAKVILSGSIDKKVTLKGLGATAGAKAAIEAAGGSLA.

Residues 1–57 form a disordered region; the sequence is MQLNNLKPAAGSKHAKRRVGRGIGSGLGKTAGRGHKGQKSRSGGFHKVGFEGGQMPL. Over residues 21–31 the composition is skewed to gly residues; the sequence is RGIGSGLGKTA.

This sequence belongs to the universal ribosomal protein uL15 family. Part of the 50S ribosomal subunit.

Functionally, binds to the 23S rRNA. In Ralstonia nicotianae (strain ATCC BAA-1114 / GMI1000) (Ralstonia solanacearum), this protein is Large ribosomal subunit protein uL15.